The following is a 237-amino-acid chain: Small ribosomal subunit protein uS2m (237 aa).

It belongs to the universal ribosomal protein uS2 family.

The protein localises to the mitochondrion. In Marchantia polymorpha (Common liverwort), this protein is Small ribosomal subunit protein uS2m (RPS2).